The chain runs to 684 residues: Poly(A) RNA polymerase cid14 (684 aa).

Disordered regions lie at residues 1-52, 64-127, and 161-219; these read MGKK…DAYD, DQEE…KRGE, and WNSD…QAYE. Composition is skewed to basic and acidic residues over residues 19-35, 73-91, 108-127, 171-186, and 199-210; these read ERTE…DKPS, GSKK…DKGG, DPLE…KRGE, SNDK…KSSK, and FFHEANEKSDSN. Positions 298 and 300 each coordinate Mg(2+). Residues Gly-364, Lys-389, Ser-407, Tyr-408, Asn-492, and Lys-496 each coordinate ATP. The 59-residue stretch at 434 to 492 folds into the PAP-associated domain; that stretch reads NFGVLLLEFLELYGKQFYYDAVGIAVHNGGFYFSKKKMGWLKPNQPYLLSIQDPVDFQN. Residues 623 to 684 are disordered; it reads GHENFQKQAL…SRAKKIRKRF (62 aa). The segment covering 628 to 655 has biased composition (polar residues); the sequence is QKQALTSTGEQSSSNSRANPSKLFNISS. The segment covering 656–672 has biased composition (acidic residues); the sequence is DDSEDEVPIIEDTTASD.

It belongs to the DNA polymerase type-B-like family. As to quaternary structure, heterooligomer. Component of the TRAMP complex composed of at least cid14, mtr4, and air1. Requires Mg(2+) as cofactor. The cofactor is Mn(2+).

It is found in the nucleus. The protein resides in the nucleolus. The catalysed reaction is RNA(n) + ATP = RNA(n)-3'-adenine ribonucleotide + diphosphate. In terms of biological role, required for 3' polyadenylation of the 5.8S and 25S rRNAs as a prelude to their degradation in the exosome. Involved in the nucleolar organization to ensure faithful chromosome segregation during mitosis. The sequence is that of Poly(A) RNA polymerase cid14 (cid14) from Schizosaccharomyces pombe (strain 972 / ATCC 24843) (Fission yeast).